The following is a 172-amino-acid chain: Small acidic protein (172 aa).

The tract at residues 1–160 (MSSARESQAR…VPETKKEAKS (160 aa)) is disordered. Basic and acidic residues predominate over residues 46–76 (GKKEHTGRLVIGDHRSTSHFRTGEEDKKMNE). Residues 80 to 92 (SQYQQSMDSTMSG) show a composition bias toward polar residues. Basic and acidic residues-rich tracts occupy residues 112–122 (AAGHSSDHESS) and 144–160 (ETHD…EAKS).

This sequence belongs to the SMAP family. As to expression, expressed in brain, heart, eye, liver, kidney and skeletal muscle.

The polypeptide is Small acidic protein (SMAP) (Gallus gallus (Chicken)).